Consider the following 220-residue polypeptide: DNA-directed RNA polymerase subunit alpha (220 aa).

Belongs to the RNA polymerase alpha chain family. In terms of assembly, in plastids the minimal PEP RNA polymerase catalytic core is composed of four subunits: alpha, beta, beta', and beta''. When a (nuclear-encoded) sigma factor is associated with the core the holoenzyme is formed, which can initiate transcription.

The protein resides in the plastid. The catalysed reaction is RNA(n) + a ribonucleoside 5'-triphosphate = RNA(n+1) + diphosphate. DNA-dependent RNA polymerase catalyzes the transcription of DNA into RNA using the four ribonucleoside triphosphates as substrates. The sequence is that of DNA-directed RNA polymerase subunit alpha (rpoA) from Euglena longa (Euglenophycean alga).